The sequence spans 454 residues: UPF0210 protein BAD_1323 (454 aa).

Belongs to the UPF0210 family. Homodimer.

The sequence is that of UPF0210 protein BAD_1323 from Bifidobacterium adolescentis (strain ATCC 15703 / DSM 20083 / NCTC 11814 / E194a).